The chain runs to 1029 residues: Translation initiation factor IF-2 (1029 aa).

The disordered stretch occupies residues 73-441 (RELRSEEDDG…RQRRRERKRE (369 aa)). 2 stretches are compositionally biased toward acidic residues: residues 106 to 121 (TAEEAAEPAVADDEEE) and 148 to 177 (AEAEPSGDEASAEASADDAPADEAPTDEAE). The span at 183–196 (AADKDAAAIADEQK) shows a compositional bias: basic and acidic residues. Acidic residues-rich tracts occupy residues 213 to 234 (TGEETSDTDAATEADATDDAEA), 242 to 258 (TEAEPETPADETEAEDV), and 279 to 322 (APDE…DEEG). The segment covering 358–372 (KDKDKDKSSKKDKKD) has biased composition (basic and acidic residues). A compositionally biased stretch (basic residues) spans 373–386 (KSNKKSKSKGKKQK). Residues 400-411 (QTLQETLQELEQ) show a composition bias toward low complexity. A compositionally biased stretch (basic residues) spans 417 to 427 (RQRRRRRRRKR). Positions 428-441 (HEEERQRRRERKRE) are enriched in basic and acidic residues. Residues 524-696 (PRAPVVTVMG…LLQSEIMELK (173 aa)) form the tr-type G domain. The G1 stretch occupies residues 533-540 (GHVDHGKT). 533 to 540 (GHVDHGKT) is a GTP binding site. The segment at 558–562 (GITQH) is G2. Positions 582-585 (DTPG) are G3. GTP is bound by residues 582 to 586 (DTPGH) and 636 to 639 (NKMD). Residues 636–639 (NKMD) form a G4 region. A G5 region spans residues 672–674 (SAK).

It belongs to the TRAFAC class translation factor GTPase superfamily. Classic translation factor GTPase family. IF-2 subfamily.

The protein localises to the cytoplasm. Functionally, one of the essential components for the initiation of protein synthesis. Protects formylmethionyl-tRNA from spontaneous hydrolysis and promotes its binding to the 30S ribosomal subunits. Also involved in the hydrolysis of GTP during the formation of the 70S ribosomal complex. The sequence is that of Translation initiation factor IF-2 from Salinibacter ruber (strain DSM 13855 / M31).